Consider the following 760-residue polypeptide: MSEVLPADSGVGTLAVFMASSGSTDIANRNSPATPPNTLNLRSSHNELLNAEIKHSDAKNSTPPKCRKKYALTNIQAAMGLSDPAVQPLLGNGSANIKLVKNGENQLRKAAEQGQQDPNKNLSPAAVINLTSEKLEVKDPHPQESSGCEILPSQPRRTKSFLNYYADLETSARELGQNLGPCQGVGEEKAQPGPGQAPVVIGNGDLLPQKPNKPQSSPEDGQVATVSSSPETKKDHPKTGAKTDCALHRIQNLAPSDEESSWTTLSQDSASPSSPDETDIWSDHSFQTDPDLPPGWKRVNDIAGTYYWHIPTGTTQWERPVSIPADLHGSRKGSLSSVTPSPTPENEKQPWSDFAVLNGGKINSDIWKDLHAATVNPDPSLKEFEGATLRYASLKLRNAPHGDDDDSCSINSDPEAKCFAVRSLGWVEMAEEDLAPGKSSVAVNNCIRQLSYCKNDIRDTVGIWGEGKDMYLSLENDMLSLVDPMDRSVLHSQPIVNIRVWGVGRDNGRERDFAYVARDKDTRILKCHVFRCDTPAKAIATSLHEICSKIMAERKNAKALACSSLQERTNMSLDVPLQVDFPTPKTELVQKFRVQYLGMLPVDRPVGMDTLNSAIENLMTSSSKEDWPSVNMNVADATVTVISEKNEEEVLVECRVRFLSFMGVGKDVHTFAFIMDTGNQRFECHVFWCEPNAANVSEAVQAACMLRYQKCLVARPPSQKVRPPPPPADSVTRRVTTNVKRGVLSLIDTLKQKRPVTETP.

2 positions are modified to phosphoserine: serine 123 and serine 160. Disordered stretches follow at residues glutamine 177–glycine 295 and proline 324–tryptophan 351. Composition is skewed to polar residues over residues asparagine 212 to proline 230 and serine 261 to proline 275. The region spanning proline 290 to serine 322 is the WW domain. 3 positions are modified to phosphoserine: serine 334, serine 409, and serine 412. PID domains follow at residues aspartate 413–aspartate 580 and threonine 586–asparagine 738.

Interacts (via C-terminus) with APP (via C-terminus). Interacts with APLP2 (via cytoplasmic domain). In terms of tissue distribution, expressed in the brain, retinal lens and muscle cells (at protein level).

It is found in the endoplasmic reticulum. Its subcellular location is the golgi apparatus. The protein localises to the early endosome. Its function is as follows. Plays a role in the maintenance of lens transparency, and may also play a role in muscle cell strength. Involved in hippocampal neurite branching and neuromuscular junction formation, as a result plays a role in spatial memory functioning. Activates transcription of APP. In Mus musculus (Mouse), this protein is Amyloid beta precursor protein binding family B member 2.